A 466-amino-acid polypeptide reads, in one-letter code: cGMP-specific 3',5'-cGMP phosphodiesterase 3 (466 aa).

Residues 1–120 (MAPQQNIMKQ…NSNNNNSNNN (120 aa)) are compositionally biased toward low complexity. The interval 1-150 (MAPQQNIMKQ…NNNKIRGYND (150 aa)) is disordered. Residues 123-134 (DDEEEEGDDEDN) are compositionally biased toward acidic residues. The span at 135 to 150 (NNNNNSNNNKIRGYND) shows a compositional bias: low complexity. In terms of domain architecture, PDEase spans 137-458 (NNNSNNNKIR…EIWSNNGSSS (322 aa)). Histidine 213 functions as the Proton donor in the catalytic mechanism. The a divalent metal cation site is built by histidine 217, histidine 253, aspartate 254, and aspartate 364.

The protein belongs to the cyclic nucleotide phosphodiesterase family. A divalent metal cation is required as a cofactor.

The protein resides in the cytoplasm. Its subcellular location is the cytosol. The enzyme catalyses 3',5'-cyclic GMP + H2O = GMP + H(+). Its activity is regulated as follows. Inhibited by 3-isobutyl-1-methylxanthine (IBMX). Its function is as follows. Phosphodiesterase specific for cGMP, which is not activated by cGMP. Involved in the degradation of intracellular cGMP. This is cGMP-specific 3',5'-cGMP phosphodiesterase 3 (pde3) from Dictyostelium discoideum (Social amoeba).